The primary structure comprises 560 residues: Long-chain-fatty-acid--CoA ligase (560 aa).

The protein belongs to the ATP-dependent AMP-binding enzyme family.

The catalysed reaction is a long-chain fatty acid + ATP + CoA = a long-chain fatty acyl-CoA + AMP + diphosphate. The chain is Long-chain-fatty-acid--CoA ligase (lcfA) from Bacillus subtilis (strain 168).